The sequence spans 473 residues: MAAKTYDAGVKDYRSIYWEPQYQVKDSDILAVFKVVPQPGVSREEAAAAVAAESSTATWTTVWTDLLTDLDYYKGRAYAIEDVPGSDEAFYAFIAYPMDLFEEGSVVNVFTSLVGNVFGFKAVRALRLEDVRFPLWFVMTCPGAPHGMKVERDLLDKYGRPLLGCTIKPKLGLSAKNYGRAVYECLRGGLDFTKDDENVNSQPFLRWRDRFLFCQEAIEKAEAETGERKGHYMNVTAGTMEEIYERAEFAKEIGTPIIMSDYLTVGWSAHTSLSRWCRKNGMLLHVHRAMHAVMDRNPNHGINFRVLAKILRLMGGDHLHSGTVVGKLEGDREATIGWINLLRDRFIKADRSRGIFFDQDWGPQPGLFPVASGGIHVWHMPALVSIFGNDSVLQFGGGTLGHPWGNAAGACANRFALEACVQARNDGRNLEKEGKEILTKAAQTSPELRMAMETWKEVRFEFDTVDKLDVQHR.

Residues N116 and T166 each contribute to the substrate site. The active-site Proton acceptor is the K168. Residue K170 participates in substrate binding. Mg(2+) is bound by residues K194, D196, and E197. An N6-carboxylysine modification is found at K194. The active-site Proton acceptor is H287. Substrate contacts are provided by R288, H320, and S372.

It belongs to the RuBisCO large chain family. Type I subfamily. As to quaternary structure, heterohexadecamer of 8 large chains and 8 small chains. Mg(2+) serves as cofactor.

The enzyme catalyses 2 (2R)-3-phosphoglycerate + 2 H(+) = D-ribulose 1,5-bisphosphate + CO2 + H2O. It catalyses the reaction D-ribulose 1,5-bisphosphate + O2 = 2-phosphoglycolate + (2R)-3-phosphoglycerate + 2 H(+). RuBisCO catalyzes two reactions: the carboxylation of D-ribulose 1,5-bisphosphate, the primary event in carbon dioxide fixation, as well as the oxidative fragmentation of the pentose substrate. Both reactions occur simultaneously and in competition at the same active site. The polypeptide is Ribulose bisphosphate carboxylase large chain 2 (Cereibacter sphaeroides (strain ATCC 17025 / ATH 2.4.3) (Rhodobacter sphaeroides)).